Consider the following 610-residue polypeptide: Elongation factor 4 (610 aa).

Residues 11 to 193 (EKIRNFSIIA…QIVEKVPAPT (183 aa)) form the tr-type G domain. GTP is bound by residues 23–28 (DHGKST) and 140–143 (NKID).

The protein belongs to the TRAFAC class translation factor GTPase superfamily. Classic translation factor GTPase family. LepA subfamily.

It is found in the cell membrane. The catalysed reaction is GTP + H2O = GDP + phosphate + H(+). In terms of biological role, required for accurate and efficient protein synthesis under certain stress conditions. May act as a fidelity factor of the translation reaction, by catalyzing a one-codon backward translocation of tRNAs on improperly translocated ribosomes. Back-translocation proceeds from a post-translocation (POST) complex to a pre-translocation (PRE) complex, thus giving elongation factor G a second chance to translocate the tRNAs correctly. Binds to ribosomes in a GTP-dependent manner. This Streptococcus pyogenes serotype M12 (strain MGAS9429) protein is Elongation factor 4.